A 208-amino-acid chain; its full sequence is Orotidine 5'-phosphate decarboxylase (208 aa).

Substrate is bound by residues aspartate 7, lysine 29, 57 to 66 (DLKLADIPNT), serine 109, 162 to 172 (PGIGAQGGKAK), glycine 185, and arginine 186. Catalysis depends on lysine 59, which acts as the Proton donor.

This sequence belongs to the OMP decarboxylase family. Type 1 subfamily. As to quaternary structure, homodimer.

It catalyses the reaction orotidine 5'-phosphate + H(+) = UMP + CO2. It participates in pyrimidine metabolism; UMP biosynthesis via de novo pathway; UMP from orotate: step 2/2. Functionally, catalyzes the decarboxylation of orotidine 5'-monophosphate (OMP) to uridine 5'-monophosphate (UMP). The protein is Orotidine 5'-phosphate decarboxylase of Pyrococcus abyssi (strain GE5 / Orsay).